A 375-amino-acid polypeptide reads, in one-letter code: Zinc finger CCCH domain-containing protein 57 (375 aa).

5 consecutive C3H1-type zinc fingers follow at residues R42 to D70, R87 to N115, R133 to T161, R243 to D271, and R289 to R317. The disordered stretch occupies residues S352–H375.

It localises to the nucleus. This Arabidopsis thaliana (Mouse-ear cress) protein is Zinc finger CCCH domain-containing protein 57 (ZFN3).